Here is a 283-residue protein sequence, read N- to C-terminus: Ribosomal RNA small subunit methyltransferase A (283 aa).

N29, L31, G56, E77, D102, and N123 together coordinate S-adenosyl-L-methionine.

It belongs to the class I-like SAM-binding methyltransferase superfamily. rRNA adenine N(6)-methyltransferase family. RsmA subfamily.

It is found in the cytoplasm. It carries out the reaction adenosine(1518)/adenosine(1519) in 16S rRNA + 4 S-adenosyl-L-methionine = N(6)-dimethyladenosine(1518)/N(6)-dimethyladenosine(1519) in 16S rRNA + 4 S-adenosyl-L-homocysteine + 4 H(+). Its function is as follows. Specifically dimethylates two adjacent adenosines (A1518 and A1519) in the loop of a conserved hairpin near the 3'-end of 16S rRNA in the 30S particle. May play a critical role in biogenesis of 30S subunits. The chain is Ribosomal RNA small subunit methyltransferase A from Acidobacterium capsulatum (strain ATCC 51196 / DSM 11244 / BCRC 80197 / JCM 7670 / NBRC 15755 / NCIMB 13165 / 161).